Reading from the N-terminus, the 341-residue chain is Methionine import ATP-binding protein MetN (341 aa).

The 239-residue stretch at 9–247 folds into the ABC transporter domain; the sequence is ISVEQLNKEI…PQSAITEELF (239 aa). 41–48 provides a ligand contact to ATP; it reads GHSGSGKS.

The protein belongs to the ABC transporter superfamily. Methionine importer (TC 3.A.1.24) family. In terms of assembly, the complex is composed of two ATP-binding proteins (MetN), two transmembrane proteins (MetI) and a solute-binding protein (MetQ).

The protein localises to the cell inner membrane. The enzyme catalyses L-methionine(out) + ATP + H2O = L-methionine(in) + ADP + phosphate + H(+). It carries out the reaction D-methionine(out) + ATP + H2O = D-methionine(in) + ADP + phosphate + H(+). Functionally, part of the ABC transporter complex MetNIQ involved in methionine import. Responsible for energy coupling to the transport system. This Chlamydia abortus (strain DSM 27085 / S26/3) (Chlamydophila abortus) protein is Methionine import ATP-binding protein MetN.